The sequence spans 245 residues: UDP-2,3-diacylglucosamine hydrolase (245 aa).

Positions 8, 10, 41, 79, and 114 each coordinate Mn(2+). 79 to 80 (NR) is a substrate binding site. Substrate-binding residues include D122, S160, K164, K167, and H195. Residues H195 and H197 each coordinate Mn(2+).

It belongs to the LpxH family. Mn(2+) is required as a cofactor.

It localises to the cell inner membrane. It catalyses the reaction UDP-2-N,3-O-bis[(3R)-3-hydroxytetradecanoyl]-alpha-D-glucosamine + H2O = 2-N,3-O-bis[(3R)-3-hydroxytetradecanoyl]-alpha-D-glucosaminyl 1-phosphate + UMP + 2 H(+). Its pathway is glycolipid biosynthesis; lipid IV(A) biosynthesis; lipid IV(A) from (3R)-3-hydroxytetradecanoyl-[acyl-carrier-protein] and UDP-N-acetyl-alpha-D-glucosamine: step 4/6. Hydrolyzes the pyrophosphate bond of UDP-2,3-diacylglucosamine to yield 2,3-diacylglucosamine 1-phosphate (lipid X) and UMP by catalyzing the attack of water at the alpha-P atom. Involved in the biosynthesis of lipid A, a phosphorylated glycolipid that anchors the lipopolysaccharide to the outer membrane of the cell. The sequence is that of UDP-2,3-diacylglucosamine hydrolase from Aromatoleum aromaticum (strain DSM 19018 / LMG 30748 / EbN1) (Azoarcus sp. (strain EbN1)).